The primary structure comprises 1090 residues: Protein transport protein Sec24A (1090 aa).

Disordered regions lie at residues 1-260 (MAQP…AHNT) and 272-325 (TPQL…TQTP). Low complexity predominate over residues 8 to 28 (AARGAAASLQAQNGAASASGS). Composition is skewed to polar residues over residues 29 to 55 (PYTN…SQPP), 138 to 151 (WQYN…QTNH), and 162 to 184 (GNPN…QTSF). The span at 194 to 236 (QNPPLPPTFQPGAPPGPPPAGGPPPSRGPAPQKTPPRAAPPPS) shows a compositional bias: pro residues. Composition is skewed to polar residues over residues 237 to 258 (FNSA…TAAH), 274 to 286 (QLVN…SRSV), and 313 to 325 (SYPS…TQTP). Positions 428, 431, 449, and 452 each coordinate Zn(2+). Residues 428–452 (CRSCRTYINPFVNFLDQRRWKCNLC) are zinc finger-like. A Gelsolin-like repeat occupies 963–1036 (PQPPILQLSV…PESARIAAFI (74 aa)).

This sequence belongs to the SEC23/SEC24 family. SEC24 subfamily. As to quaternary structure, COPII is composed of at least five proteins: the Sec23/24 complex, the Sec13/31 complex and Sar1. Interacts with TMED2. Interacts (as part of the Sec23/24 complex) with SEC22B; recruits SEC22B into COPII-coated vesicles for its transport from the endoplasmic reticulum to the Golgi. Interacts with STING1; promoting STING1 translocation to COPII vesicles in a STEEP1-dependent manner. Interacts with TMEM39A. Interacts with SACM1L; this interaction is reduced in the absence of TMEM39A. Interacts with kinase FAM20C; transport of FAM20C from the endoplasmic reticulum to the Golgi is likely to be mediated by COPII vesicles.

The protein localises to the cytoplasmic vesicle. Its subcellular location is the COPII-coated vesicle membrane. It localises to the endoplasmic reticulum membrane. It is found in the cytoplasm. The protein resides in the cytosol. Its function is as follows. Component of the coat protein complex II (COPII) which promotes the formation of transport vesicles from the endoplasmic reticulum (ER). The coat has two main functions, the physical deformation of the endoplasmic reticulum membrane into vesicles and the selection of cargo molecules for their transport to the Golgi complex. Plays a central role in cargo selection within the COPII complex and together with SEC24B may have a different specificity compared to SEC24C and SEC24D. May package preferentially cargos with cytoplasmic DxE or LxxLE motifs and may also recognize conformational epitopes. The protein is Protein transport protein Sec24A of Mus musculus (Mouse).